We begin with the raw amino-acid sequence, 312 residues long: 2,3-dihydroxyphenylpropionate/2,3-dihydroxicinnamic acid 1,2-dioxygenase (312 aa).

His-115 serves as the catalytic Proton donor. His-179 functions as the Proton acceptor in the catalytic mechanism.

This sequence belongs to the LigB/MhpB extradiol dioxygenase family. Homotetramer. Fe(2+) is required as a cofactor.

The enzyme catalyses 3-(2,3-dihydroxyphenyl)propanoate + O2 = (2Z,4E)-2-hydroxy-6-oxonona-2,4-dienedioate + H(+). The catalysed reaction is (2E)-3-(2,3-dihydroxyphenyl)prop-2-enoate + O2 = (2Z,4E,7E)-2-hydroxy-6-oxonona-2,4,7-trienedioate + H(+). It participates in aromatic compound metabolism; 3-phenylpropanoate degradation. Catalyzes the non-heme iron(II)-dependent oxidative cleavage of 2,3-dihydroxyphenylpropionic acid and 2,3-dihydroxicinnamic acid into 2-hydroxy-6-ketononadienedioate and 2-hydroxy-6-ketononatrienedioate, respectively. The chain is 2,3-dihydroxyphenylpropionate/2,3-dihydroxicinnamic acid 1,2-dioxygenase from Azotobacter vinelandii (strain DJ / ATCC BAA-1303).